A 624-amino-acid polypeptide reads, in one-letter code: Probable Xaa-Pro aminopeptidase P (624 aa).

Residues Asp421, Asp432, Glu530, and Glu544 each contribute to the Mn(2+) site.

Belongs to the peptidase M24B family. Requires Mn(2+) as cofactor.

It catalyses the reaction Release of any N-terminal amino acid, including proline, that is linked to proline, even from a dipeptide or tripeptide.. In terms of biological role, catalyzes the removal of a penultimate prolyl residue from the N-termini of peptides. This chain is Probable Xaa-Pro aminopeptidase P (AMPP), found in Arthroderma otae (strain ATCC MYA-4605 / CBS 113480) (Microsporum canis).